The primary structure comprises 408 residues: Dual-specificity RNA methyltransferase RlmN (408 aa).

Residue glutamate 126 is the Proton acceptor of the active site. One can recognise a Radical SAM core domain in the interval 132–373; the sequence is EEGRGTLCLS…NQAGYASPIR (242 aa). A disulfide bridge links cysteine 139 with cysteine 384. Cysteine 146, cysteine 150, and cysteine 153 together coordinate [4Fe-4S] cluster. S-adenosyl-L-methionine is bound by residues 210–211, serine 242, 264–266, and asparagine 341; these read GE and SLH. Cysteine 384 functions as the S-methylcysteine intermediate in the catalytic mechanism.

The protein belongs to the radical SAM superfamily. RlmN family. The cofactor is [4Fe-4S] cluster.

It is found in the cytoplasm. It catalyses the reaction adenosine(2503) in 23S rRNA + 2 reduced [2Fe-2S]-[ferredoxin] + 2 S-adenosyl-L-methionine = 2-methyladenosine(2503) in 23S rRNA + 5'-deoxyadenosine + L-methionine + 2 oxidized [2Fe-2S]-[ferredoxin] + S-adenosyl-L-homocysteine. The enzyme catalyses adenosine(37) in tRNA + 2 reduced [2Fe-2S]-[ferredoxin] + 2 S-adenosyl-L-methionine = 2-methyladenosine(37) in tRNA + 5'-deoxyadenosine + L-methionine + 2 oxidized [2Fe-2S]-[ferredoxin] + S-adenosyl-L-homocysteine. Specifically methylates position 2 of adenine 2503 in 23S rRNA and position 2 of adenine 37 in tRNAs. m2A2503 modification seems to play a crucial role in the proofreading step occurring at the peptidyl transferase center and thus would serve to optimize ribosomal fidelity. The polypeptide is Dual-specificity RNA methyltransferase RlmN (Bartonella henselae (strain ATCC 49882 / DSM 28221 / CCUG 30454 / Houston 1) (Rochalimaea henselae)).